The sequence spans 1408 residues: DNA-directed RNA polymerase subunit beta' (1408 aa).

The Zn(2+) site is built by cysteine 70, cysteine 72, cysteine 85, and cysteine 88. Mg(2+) is bound by residues aspartate 460, aspartate 462, and aspartate 464. Cysteine 814, cysteine 888, cysteine 895, and cysteine 898 together coordinate Zn(2+).

The protein belongs to the RNA polymerase beta' chain family. As to quaternary structure, the RNAP catalytic core consists of 2 alpha, 1 beta, 1 beta' and 1 omega subunit. When a sigma factor is associated with the core the holoenzyme is formed, which can initiate transcription. Requires Mg(2+) as cofactor. Zn(2+) is required as a cofactor.

The enzyme catalyses RNA(n) + a ribonucleoside 5'-triphosphate = RNA(n+1) + diphosphate. Its function is as follows. DNA-dependent RNA polymerase catalyzes the transcription of DNA into RNA using the four ribonucleoside triphosphates as substrates. In Serratia proteamaculans (strain 568), this protein is DNA-directed RNA polymerase subunit beta'.